A 124-amino-acid chain; its full sequence is Small ribosomal subunit protein uS13 (124 aa).

Positions Gly95–Arg124 are disordered.

The protein belongs to the universal ribosomal protein uS13 family. In terms of assembly, part of the 30S ribosomal subunit. Forms a loose heterodimer with protein S19. Forms two bridges to the 50S subunit in the 70S ribosome.

Functionally, located at the top of the head of the 30S subunit, it contacts several helices of the 16S rRNA. In the 70S ribosome it contacts the 23S rRNA (bridge B1a) and protein L5 of the 50S subunit (bridge B1b), connecting the 2 subunits; these bridges are implicated in subunit movement. Contacts the tRNAs in the A and P-sites. The protein is Small ribosomal subunit protein uS13 of Mycobacterium avium (strain 104).